Here is a 281-residue protein sequence, read N- to C-terminus: Transcription factor LBX1 (281 aa).

The span at Met-1–Leu-20 shows a compositional bias: basic and acidic residues. Residues Met-1 to Pro-35 are disordered. A DNA-binding region (homeobox) is located at residues Arg-125 to Leu-184. The interval Asn-214 to Asp-281 is disordered. Residues Ser-253–Asp-267 are compositionally biased toward polar residues. Residues Cys-268–Asp-281 are compositionally biased toward acidic residues.

As to quaternary structure, interacts with SKOR1 which acts as a transcriptional corepressor.

It localises to the nucleus. Transcription factor required for the development of GABAergic interneurons in the dorsal horn of the spinal cord and migration and further development of hypaxial muscle precursor cells for limb muscles, diaphragm and hypoglossal cord. This Homo sapiens (Human) protein is Transcription factor LBX1 (LBX1).